A 466-amino-acid polypeptide reads, in one-letter code: ATP synthase subunit beta (466 aa).

156–163 (GGAGVGKT) contacts ATP.

It belongs to the ATPase alpha/beta chains family. In terms of assembly, F-type ATPases have 2 components, CF(1) - the catalytic core - and CF(0) - the membrane proton channel. CF(1) has five subunits: alpha(3), beta(3), gamma(1), delta(1), epsilon(1). CF(0) has three main subunits: a(1), b(2) and c(9-12). The alpha and beta chains form an alternating ring which encloses part of the gamma chain. CF(1) is attached to CF(0) by a central stalk formed by the gamma and epsilon chains, while a peripheral stalk is formed by the delta and b chains.

The protein localises to the cell inner membrane. The enzyme catalyses ATP + H2O + 4 H(+)(in) = ADP + phosphate + 5 H(+)(out). Produces ATP from ADP in the presence of a proton gradient across the membrane. The catalytic sites are hosted primarily by the beta subunits. This chain is ATP synthase subunit beta, found in Dechloromonas aromatica (strain RCB).